A 364-amino-acid chain; its full sequence is Aminomethyltransferase (364 aa).

Belongs to the GcvT family. The glycine cleavage system is composed of four proteins: P, T, L and H.

It catalyses the reaction N(6)-[(R)-S(8)-aminomethyldihydrolipoyl]-L-lysyl-[protein] + (6S)-5,6,7,8-tetrahydrofolate = N(6)-[(R)-dihydrolipoyl]-L-lysyl-[protein] + (6R)-5,10-methylene-5,6,7,8-tetrahydrofolate + NH4(+). In terms of biological role, the glycine cleavage system catalyzes the degradation of glycine. The chain is Aminomethyltransferase from Escherichia coli O157:H7.